We begin with the raw amino-acid sequence, 798 residues long: Acetyl-CoA decarbonylase/synthase complex subunit alpha 2 (798 aa).

[4Fe-4S] cluster is bound by residues Cys65, Cys68, Cys69, Cys71, Cys76, and Cys86. His109 is a binding site for CO. Positions 246, 274, and 313 each coordinate [Ni-4Fe-4S] cluster. 2 consecutive 4Fe-4S ferredoxin-type domains span residues 395–424 (EEQF…IGEA) and 434–463 (SKLE…IDMY). Positions 405, 408, 411, 415, 443, 446, 449, and 453 each coordinate [4Fe-4S] cluster. [Ni-4Fe-4S] cluster contacts are provided by Cys511, Cys540, and Cys575.

It belongs to the Ni-containing carbon monoxide dehydrogenase family. Heterotetramer of two alpha and two epsilon subunits. The ACDS complex is made up of alpha, epsilon, beta, gamma and delta subunits with a probable stoichiometry of (alpha(2)epsilon(2))(4)-beta(8)-(gamma(1)delta(1))(8). The cofactor is [4Fe-4S] cluster. Requires [Ni-4Fe-4S] cluster as cofactor.

It carries out the reaction CO + 2 oxidized [2Fe-2S]-[ferredoxin] + H2O = 2 reduced [2Fe-2S]-[ferredoxin] + CO2 + 2 H(+). In terms of biological role, part of the ACDS complex that catalyzes the reversible cleavage of acetyl-CoA, allowing autotrophic growth from CO(2). The alpha-epsilon subcomponent functions as a carbon monoxide dehydrogenase. This chain is Acetyl-CoA decarbonylase/synthase complex subunit alpha 2, found in Archaeoglobus fulgidus (strain ATCC 49558 / DSM 4304 / JCM 9628 / NBRC 100126 / VC-16).